Here is a 219-residue protein sequence, read N- to C-terminus: 2-phospho-L-lactate guanylyltransferase (219 aa).

Belongs to the CofC family. As to quaternary structure, homodimer.

The enzyme catalyses (2S)-2-phospholactate + GTP + H(+) = (2S)-lactyl-2-diphospho-5'-guanosine + diphosphate. It participates in cofactor biosynthesis; coenzyme F420 biosynthesis. Guanylyltransferase that catalyzes the activation of (2S)-2-phospholactate (2-PL) as (2S)-lactyl-2-diphospho-5'-guanosine, via the condensation of 2-PL with GTP. It is involved in the biosynthesis of coenzyme F420, a hydride carrier cofactor. The polypeptide is 2-phospho-L-lactate guanylyltransferase (Methanocella arvoryzae (strain DSM 22066 / NBRC 105507 / MRE50)).